The sequence spans 258 residues: MDGIIEQKSMLVHSKISDAGKRNGLINTRNLMAESRDGLVSVYPAPQYQSHRVGASTVPASLDSSRSEPMQQLLDPNTLQQSVESRYRPNIILYSEGVLRSWGDGVAADCCETTFIEDRSPTKDSLEYPDGKFIDLSADDIKIHTLSYDVEEEEEFQELESDYSSDTESEDNFLMMPPRDHLGLSVFSMLCCFWPLGIAAFYLSHETNKAVAKGDLHQASTSSRRALFLAVLSITIGTGVYVGVAVALIAYLSKNNHL.

The Cytoplasmic portion of the chain corresponds to 1–181 (MDGIIEQKSM…NFLMMPPRDH (181 aa)). Position 137 is a phosphoserine (Ser-137). Residues 182-202 (LGLSVFSMLCCFWPLGIAAFY) traverse the membrane as a helical segment. Over 203-228 (LSHETNKAVAKGDLHQASTSSRRALF) the chain is Extracellular. An intramembrane region (helical) is located at residues 229–249 (LAVLSITIGTGVYVGVAVALI). Topologically, residues 250 to 258 (AYLSKNNHL) are extracellular.

Belongs to the CD225/Dispanin family. In terms of assembly, homodimer. Interacts with GRIA1 and GRIA2.

The protein resides in the cell membrane. It localises to the early endosome membrane. It is found in the postsynaptic density membrane. Its subcellular location is the synapse. The protein localises to the cell projection. The protein resides in the dendrite. It localises to the dendritic spine. Its function is as follows. May regulate AMPA receptor content at nascent synapses, and have a role in postsynaptic development and maturation. The chain is Synapse differentiation-inducing gene protein 1 (SYNDIG1) from Homo sapiens (Human).